We begin with the raw amino-acid sequence, 194 residues long: UPF0232 protein MSMEG_0004/MSMEI_0006 (194 aa).

Positions 1-14 (MTGPFDDDGPEEDA) are enriched in acidic residues. Positions 1–81 (MTGPFDDDGP…GPGPDARDPQ (81 aa)) are disordered. Residues 30–52 (DLVRRTLEEARGAARSQGKDVGR) show a composition bias toward basic and acidic residues.

The protein belongs to the UPF0232 family.

In Mycolicibacterium smegmatis (strain ATCC 700084 / mc(2)155) (Mycobacterium smegmatis), this protein is UPF0232 protein MSMEG_0004/MSMEI_0006.